The chain runs to 861 residues: ToMV resistant protein Tm-2 netted virescent (861 aa).

Positions 63–83 (VKNLLKDIQELAGDVEDLLDD) form a coiled coil. One can recognise an NB-ARC domain in the interval 162–388 (DDFNMLQAKL…LESMGHKVQD (227 aa)). 185 to 192 (GMPGLGKT) contributes to the ATP binding site. LRR repeat units follow at residues 225–248 (LDIA…NLRS), 305–327 (LHAL…IFNF), 388–411 (DGCA…CFLY), 449–472 (LAED…TYNG), 510–536 (VARL…KLEK), 585–608 (MTCL…IVKL), 609–631 (TRLE…VWES), 652–680 (ISSF…FFEP), 689–710 (LRKL…IFSP), 712–735 (LKAL…LSSY), 736–758 (PHIA…SFPP), 784–807 (LRKL…EANG), and 810–835 (FPQL…DVSM).

The protein belongs to the disease resistance NB-LRR family. In terms of assembly, (Microbial infection) Interacts with tobamoviruses mouvement protein at the plasma membrane; this interaction triggers defense responses leading to programmed cell death. As to quaternary structure, binds to HSP90 proteins; this interaction seems required for defense responses toward tobamoviruses.

It localises to the cell membrane. Functionally, inhibitor of viral mouvements which confers resistance to some tobamoviruses including tomato mosaic virus (ToMV) (e.g. isolate L and W3) and tobacco mosaic virus (TMV), but not to resistance-breaking isolates (e.g. Ltbl) ToMV and tomato brown rugose fruit virus (ToBRFV). Elicits a hypersensitive reaction in response to avirulent (Avr) movement proteins from resistance inducing tobamoviruses (e.g. ToMV and TMV) strains, thus leading to programmed cell death. This Solanum lycopersicum (Tomato) protein is ToMV resistant protein Tm-2 netted virescent.